The sequence spans 1357 residues: DNA-directed RNA polymerase subunit beta (1357 aa).

Belongs to the RNA polymerase beta chain family. As to quaternary structure, the RNAP catalytic core consists of 2 alpha, 1 beta, 1 beta' and 1 omega subunit. When a sigma factor is associated with the core the holoenzyme is formed, which can initiate transcription.

The enzyme catalyses RNA(n) + a ribonucleoside 5'-triphosphate = RNA(n+1) + diphosphate. Functionally, DNA-dependent RNA polymerase catalyzes the transcription of DNA into RNA using the four ribonucleoside triphosphates as substrates. This chain is DNA-directed RNA polymerase subunit beta, found in Pseudomonas aeruginosa (strain LESB58).